The following is a 427-amino-acid chain: MTDFAFDAPTVIRTKRDGGRLSDAAIDWVVKAYTDGRVADEQMSALLMAIVWRGMDRGEIARWTAAMLASGARLDFTDLPLATVDKHSTGGVGDKITLPLVPVVAACGGAVPQASGRGLGHTGGTLDKLESITGFTANLSNQRVREQLCDVGAAIFAAGQLAPADAKLYALRDITGTVESLPLIASSIMSKKLAEGAGALVLDVKVGSGAFMRSPVQARELAHTMVELGAAHGVPTRALLTEMNCPLGRTVGNALEVAEALEVLAGGGPPDVVELTLRLAGEMLELAGIHGRDPAQTLRDGTAMDRFRRLVAAQGGDLSKPLPIGSHSETVTAGASGTMGDIDAMAVGLAAWRLGAGRSRPGARVQHGAGVRIHRRPGEPVVVGEPLFTLYTNAPERFGAARAELAGGWSIRDSPPQVRPLIVDRIV.

The protein belongs to the thymidine/pyrimidine-nucleoside phosphorylase family. In terms of assembly, homodimer.

It catalyses the reaction thymidine + phosphate = 2-deoxy-alpha-D-ribose 1-phosphate + thymine. Functionally, the enzymes which catalyze the reversible phosphorolysis of pyrimidine nucleosides are involved in the degradation of these compounds and in their utilization as carbon and energy sources, or in the rescue of pyrimidine bases for nucleotide synthesis. This Mycobacterium tuberculosis (strain CDC 1551 / Oshkosh) protein is Thymidine phosphorylase (deoA).